The chain runs to 317 residues: Pantothenate kinase (317 aa).

99 to 106 is an ATP binding site; that stretch reads GSVSVGKS.

This sequence belongs to the prokaryotic pantothenate kinase family.

The protein resides in the cytoplasm. It catalyses the reaction (R)-pantothenate + ATP = (R)-4'-phosphopantothenate + ADP + H(+). It functions in the pathway cofactor biosynthesis; coenzyme A biosynthesis; CoA from (R)-pantothenate: step 1/5. This chain is Pantothenate kinase, found in Mannheimia succiniciproducens (strain KCTC 0769BP / MBEL55E).